The following is a 78-amino-acid chain: UPF0248 protein Msed_0897 (78 aa).

This sequence belongs to the UPF0248 family.

The chain is UPF0248 protein Msed_0897 from Metallosphaera sedula (strain ATCC 51363 / DSM 5348 / JCM 9185 / NBRC 15509 / TH2).